The chain runs to 631 residues: Glutamyl-tRNA(Gln) amidotransferase subunit E (631 aa).

It belongs to the GatB/GatE family. GatE subfamily. As to quaternary structure, heterodimer of GatD and GatE.

It carries out the reaction L-glutamyl-tRNA(Gln) + L-glutamine + ATP + H2O = L-glutaminyl-tRNA(Gln) + L-glutamate + ADP + phosphate + H(+). Functionally, allows the formation of correctly charged Gln-tRNA(Gln) through the transamidation of misacylated Glu-tRNA(Gln) in organisms which lack glutaminyl-tRNA synthetase. The reaction takes place in the presence of glutamine and ATP through an activated gamma-phospho-Glu-tRNA(Gln). The GatDE system is specific for glutamate and does not act on aspartate. In Methanococcus maripaludis (strain C5 / ATCC BAA-1333), this protein is Glutamyl-tRNA(Gln) amidotransferase subunit E.